We begin with the raw amino-acid sequence, 446 residues long: MLLPQLCWLPLLAGLLPPVPAQKFSALTFLRVDQDKDKDCSLDCAGSPQKPLCASDGRTFLSRCEFQRAKCKDPQLEIAYRGNCKDVSRCVAERKYTQEQARKEFQQVFIPECNDDGTYSQVQCHSYTGYCWCVTPNGRPISGTAVAHKTPRCPGSVNEKLPQREGTGKTDDAAAPALETQPQGDEEDIASRYPTLWTEQVKSRQNKTNKNSVSSCDQEHQSALEEAKQPKNDNVVIPECAHGGLYKPVQCHPSTGYCWCVLVDTGRPIPGTSTRYEQPKCDNTARAHPAKARDLYKGRQLQGCPGAKKHEFLTSVLDALSTDMVHAASDPSSSSGRLSEPDPSHTLEERVVHWYFKLLDKNSSGDIGKKEIKPFKRFLRKKSKPKKCVKKFVEYCDVNNDKSISVQELMGCLGVAKEDGKADTKKRHTPRGHAESTSNRQPRKQG.

The signal sequence occupies residues 1–21; the sequence is MLLPQLCWLPLLAGLLPPVPA. Positions 34–86 constitute a Kazal-like domain; sequence QDKDKDCSLDCAGSPQKPLCASDGRTFLSRCEFQRAKCKDPQLEIAYRGNCKD. Intrachain disulfides connect cysteine 40–cysteine 71, cysteine 44–cysteine 64, cysteine 53–cysteine 84, cysteine 90–cysteine 113, cysteine 124–cysteine 131, and cysteine 133–cysteine 153. The region spanning 87 to 153 is the Thyroglobulin type-1 1 domain; that stretch reads VSRCVAERKY…TAVAHKTPRC (67 aa). Positions 147–228 are disordered; it reads AHKTPRCPGS…EHQSALEEAK (82 aa). The span at 161-172 shows a compositional bias: basic and acidic residues; sequence LPQREGTGKTDD. A glycan (N-linked (GlcNAc...) asparagine) is linked at asparagine 206. Residues 206–216 are compositionally biased toward polar residues; sequence NKTNKNSVSSC. A Thyroglobulin type-1 2 domain is found at 213 to 281; that stretch reads VSSCDQEHQS…TSTRYEQPKC (69 aa). Intrachain disulfides connect cysteine 216–cysteine 240, cysteine 251–cysteine 258, and cysteine 260–cysteine 281. Residues 217-228 are compositionally biased toward basic and acidic residues; the sequence is DQEHQSALEEAK. 2 consecutive EF-hand domains span residues 347 to 382 and 384 to 419; these read LEER…LRKK and KPKK…AKED. 10 residues coordinate Ca(2+): aspartate 360, asparagine 362, serine 364, aspartate 366, glutamate 371, aspartate 397, asparagine 399, aspartate 401, serine 403, and glutamate 408. Asparagine 362 carries N-linked (GlcNAc...) asparagine glycosylation. Residues 416-446 form a disordered region; it reads AKEDGKADTKKRHTPRGHAESTSNRQPRKQG.

As to quaternary structure, binds various proteins from the extracellular matrix.

It is found in the secreted. It localises to the extracellular space. The protein localises to the extracellular matrix. The protein resides in the basement membrane. In terms of biological role, promotes matrix assembly and cell adhesiveness. Can stimulate endothelial cell proliferation, migration, as well as angiogenesis. This Homo sapiens (Human) protein is SPARC-related modular calcium-binding protein 2 (SMOC2).